The chain runs to 100 residues: Large ribosomal subunit protein uL23 (100 aa).

The protein belongs to the universal ribosomal protein uL23 family. Part of the 50S ribosomal subunit. Contacts protein L29, and trigger factor when it is bound to the ribosome.

In terms of biological role, one of the early assembly proteins it binds 23S rRNA. One of the proteins that surrounds the polypeptide exit tunnel on the outside of the ribosome. Forms the main docking site for trigger factor binding to the ribosome. The protein is Large ribosomal subunit protein uL23 of Thermotoga sp. (strain RQ2).